We begin with the raw amino-acid sequence, 226 residues long: 2,3-bisphosphoglycerate-dependent phosphoglycerate mutase (226 aa).

Substrate-binding positions include 8–15 (RHGQSVWN), 21–22 (TG), Arg58, 109–112 (ERMY), Lys120, 136–137 (RR), and 180–181 (GN). The Tele-phosphohistidine intermediate role is filled by His9. Residue Glu109 is the Proton donor/acceptor of the active site.

It belongs to the phosphoglycerate mutase family. BPG-dependent PGAM subfamily.

It carries out the reaction (2R)-2-phosphoglycerate = (2R)-3-phosphoglycerate. It functions in the pathway carbohydrate degradation; glycolysis; pyruvate from D-glyceraldehyde 3-phosphate: step 3/5. Catalyzes the interconversion of 2-phosphoglycerate and 3-phosphoglycerate. The polypeptide is 2,3-bisphosphoglycerate-dependent phosphoglycerate mutase (Chlamydia trachomatis serovar L2b (strain UCH-1/proctitis)).